A 299-amino-acid polypeptide reads, in one-letter code: tRNA pseudouridine synthase B (299 aa).

The Nucleophile role is filled by Asp-38.

Belongs to the pseudouridine synthase TruB family. Type 1 subfamily.

The catalysed reaction is uridine(55) in tRNA = pseudouridine(55) in tRNA. In terms of biological role, responsible for synthesis of pseudouridine from uracil-55 in the psi GC loop of transfer RNAs. This is tRNA pseudouridine synthase B from Alkaliphilus oremlandii (strain OhILAs) (Clostridium oremlandii (strain OhILAs)).